Here is a 255-residue protein sequence, read N- to C-terminus: Hydroxyacylglutathione hydrolase (255 aa).

7 residues coordinate Zn(2+): His53, His55, Asp57, His58, His110, Asp127, and His165.

Belongs to the metallo-beta-lactamase superfamily. Glyoxalase II family. As to quaternary structure, monomer. Zn(2+) is required as a cofactor.

It catalyses the reaction an S-(2-hydroxyacyl)glutathione + H2O = a 2-hydroxy carboxylate + glutathione + H(+). It functions in the pathway secondary metabolite metabolism; methylglyoxal degradation; (R)-lactate from methylglyoxal: step 2/2. Thiolesterase that catalyzes the hydrolysis of S-D-lactoyl-glutathione to form glutathione and D-lactic acid. The protein is Hydroxyacylglutathione hydrolase of Xanthomonas axonopodis pv. citri (strain 306).